The following is a 747-amino-acid chain: Protein Niban 2 (747 aa).

A lipid anchor (N-myristoyl glycine) is attached at G2. The region spanning 68–192 (RIIFSGNLFQ…WQAVLQDCVR (125 aa)) is the PH domain. S568 and S574 each carry phosphoserine. Positions 589 to 747 (WGEQYGDGGD…EDSAGVQTEF (159 aa)) are disordered. Positions 593 to 602 (YGDGGDGSDS) are enriched in gly residues. Residues S605, S626, S641, S645, S648, S667, S672, S683, S693, and S697 each carry the phosphoserine modification. Residues 708 to 722 (VDLEPPKPSDQETGE) are compositionally biased toward basic and acidic residues. Residues 734–747 (HTTTEDSAGVQTEF) are compositionally biased toward polar residues.

The protein belongs to the Niban family. In terms of processing, as apoptosis proceeds, degraded via an proteasome-independent pathway, probably by caspases.

The protein localises to the cytoplasm. It localises to the cytosol. It is found in the cell junction. Its subcellular location is the adherens junction. The protein resides in the membrane. May play a role in apoptosis suppression. In Rattus norvegicus (Rat), this protein is Protein Niban 2.